The sequence spans 517 residues: 2,3-bisphosphoglycerate-independent phosphoglycerate mutase 1 (517 aa).

Residues aspartate 17 and serine 67 each coordinate Mn(2+). Residue serine 67 is the Phosphoserine intermediate of the active site. Residues histidine 128, 158-159 (RD), arginine 190, arginine 196, 267-270 (RPDR), and lysine 340 each bind substrate. Residues aspartate 407, histidine 411, aspartate 448, histidine 449, and histidine 467 each contribute to the Mn(2+) site.

Belongs to the BPG-independent phosphoglycerate mutase family. It depends on Mn(2+) as a cofactor.

It catalyses the reaction (2R)-2-phosphoglycerate = (2R)-3-phosphoglycerate. It participates in carbohydrate degradation; glycolysis; pyruvate from D-glyceraldehyde 3-phosphate: step 3/5. Its function is as follows. Catalyzes the interconversion of 2-phosphoglycerate and 3-phosphoglycerate. This is 2,3-bisphosphoglycerate-independent phosphoglycerate mutase 1 from Methanosarcina barkeri (strain Fusaro / DSM 804).